The sequence spans 84 residues: Small ribosomal subunit protein bS16 (84 aa).

It belongs to the bacterial ribosomal protein bS16 family.

The chain is Small ribosomal subunit protein bS16 from Burkholderia ambifaria (strain MC40-6).